We begin with the raw amino-acid sequence, 533 residues long: D-3-phosphoglycerate dehydrogenase (533 aa).

An N-acetylalanine modification is found at alanine 2. Serine 14 is modified (phosphoserine). Lysine 21 is modified (N6-acetyllysine; alternate). Residue lysine 21 forms a Glycyl lysine isopeptide (Lys-Gly) (interchain with G-Cter in SUMO1); alternate linkage. Lysine 21 is covalently cross-linked (Glycyl lysine isopeptide (Lys-Gly) (interchain with G-Cter in SUMO2); alternate). The residue at position 58 (lysine 58) is an N6-acetyllysine. Residues threonine 78, 155–156 (RI), aspartate 175, threonine 207, 234–236 (CAR), and aspartate 260 contribute to the NAD(+) site. Residue threonine 78 is modified to Phosphothreonine. The active site involves arginine 236. The active site involves glutamate 265. Catalysis depends on histidine 283, which acts as the Proton donor. Residue 283–286 (HLGA) participates in NAD(+) binding.

This sequence belongs to the D-isomer specific 2-hydroxyacid dehydrogenase family. As to quaternary structure, homotetramer.

The enzyme catalyses (2R)-3-phosphoglycerate + NAD(+) = 3-phosphooxypyruvate + NADH + H(+). The catalysed reaction is (R)-2-hydroxyglutarate + NAD(+) = 2-oxoglutarate + NADH + H(+). It catalyses the reaction (S)-malate + NAD(+) = oxaloacetate + NADH + H(+). The protein operates within amino-acid biosynthesis; L-serine biosynthesis; L-serine from 3-phospho-D-glycerate: step 1/3. Catalyzes the reversible oxidation of 3-phospho-D-glycerate to 3-phosphonooxypyruvate, the first step of the phosphorylated L-serine biosynthesis pathway. Also catalyzes the reversible oxidation of 2-hydroxyglutarate to 2-oxoglutarate and the reversible oxidation of (S)-malate to oxaloacetate. The sequence is that of D-3-phosphoglycerate dehydrogenase (PHGDH) from Pongo abelii (Sumatran orangutan).